A 333-amino-acid chain; its full sequence is Cytochrome f (333 aa).

The first 44 residues, 1 to 44 (MRNACTRARLTRTARAMVKTLFIAIASVTFFFTSDLALPQSAAA), serve as a signal peptide directing secretion. Heme is bound by residues Tyr-45, Cys-66, Cys-69, and His-70. Residues 299-318 (VGWLIAFVALVMLAQVMLVL) traverse the membrane as a helical segment.

The protein belongs to the cytochrome f family. As to quaternary structure, the 4 large subunits of the cytochrome b6-f complex are cytochrome b6, subunit IV (17 kDa polypeptide, PetD), cytochrome f and the Rieske protein, while the 4 small subunits are PetG, PetL, PetM and PetN. The complex functions as a dimer. Heme is required as a cofactor.

The protein localises to the cellular thylakoid membrane. In terms of biological role, component of the cytochrome b6-f complex, which mediates electron transfer between photosystem II (PSII) and photosystem I (PSI), cyclic electron flow around PSI, and state transitions. This is Cytochrome f from Nostoc sp. (strain PCC 7120 / SAG 25.82 / UTEX 2576).